Consider the following 197-residue polypeptide: Phosphoheptose isomerase (197 aa).

One can recognise an SIS domain in the interval 34–196 (MVHCLLGGNK…DRTLFPQDEQ (163 aa)). 49-51 (NGG) is a binding site for substrate. The Zn(2+) site is built by H58 and E62. Substrate is bound by residues E62, 91–92 (ND), 117–119 (STS), S122, and Q172. Zn(2+)-binding residues include Q172 and H180.

Belongs to the SIS family. GmhA subfamily. As to quaternary structure, homotetramer. Zn(2+) is required as a cofactor.

Its subcellular location is the cytoplasm. It catalyses the reaction 2 D-sedoheptulose 7-phosphate = D-glycero-alpha-D-manno-heptose 7-phosphate + D-glycero-beta-D-manno-heptose 7-phosphate. Its pathway is carbohydrate biosynthesis; D-glycero-D-manno-heptose 7-phosphate biosynthesis; D-glycero-alpha-D-manno-heptose 7-phosphate and D-glycero-beta-D-manno-heptose 7-phosphate from sedoheptulose 7-phosphate: step 1/1. Functionally, catalyzes the isomerization of sedoheptulose 7-phosphate in D-glycero-D-manno-heptose 7-phosphate. The chain is Phosphoheptose isomerase from Shewanella sediminis (strain HAW-EB3).